Consider the following 1088-residue polypeptide: MHSKDMDFVQMFVCFLLCWTGVDAVFNLKYTVEEELRAGTKIANVTADAKVAGFALGNRQPYLRVISNSEPRWVNLSPAGLLITKQKIDRDAVCRQTPKCFISLEVMSNSMEICVIKIEIIDVNDNAPRFPTNHIDIEISENAAPGTRFPLEGASDPDSGSNGIQTYTITPNDIFGLEIKTRGDGSKIAELVVEKTLDRETQSRYTFELTAEDGGDPPKSGTVQLNIKVIDSNDNNPVFDEPVYTVNVLENSPINTLVIDLNATDPDEGTNGEVVYSFINFVSNLTKQMFKIDPKTGVITVNGVLDHEELHIHEIDVQAKDLGPNSIPAHCKVIVNVIDINDNAPEIKLLSENSEMVEVSENAPLGYVIALVRVSDNDSGANGKVQCRLQGNVPFRLNEFESFSTLLVDGRLDREQRDMYNLTILAEDSGYPPLRSSKSFAVKVTDENDNPPYFTKPHYQAMVLENNVPGAFLLAVSARDPDLGMNGTVSYEIIKSEVRGMSVESYVTVNSNGEIYGVRAFNHEDTRTFEFKVSAKDGGDPPLTSNATVRIVVLDVNDNTPVMTTPPLVNGTAEVSIPKNAGVGYLVTQIKADDYDEGENGRLTYSISEGDMAYFEIDQINGEVRTTKTFGENAKPSYQITVVAHDHGQTSLSASAYIVIYLSPDLNAQEQIGPVNLSLIFIIALGSIAVILFVTMIFVAVKCKRDNKEIRTYNCRVAEYSYGNQKKSSKKKKLSKNDIRLVPRDVEETDKMNVVSCSSLTSSLNYFDYHQQTLPLGCRRSESTFLNVENQNSRNAAPNHGYHHTFTGQGPQQPDLIINGMPLPETENYSIDSSYVNSRAHLIKSTSTFKDMEGNSLKDSGHEESDQTDSEHDVQRGHYADTAVNDVLNMTVPSNNSQIPDQDQSEGFHCQDECRILGHSDRCWMPRVPIPARAKSPEHGRNVIALSIEATTVDVPHYEDCGTTKRTFATFGKDGPDEDRAEQRGRRQTAEPAVCSPKTNGAVREAGNGREAVSPITSPVHLKSPQSKASSTYNTLKCRDAERIANHSLLRQPEGKDSEPAMREINTLLQDGRDKESPGSKRLKDIVL.

The signal sequence occupies residues 1–24 (MHSKDMDFVQMFVCFLLCWTGVDA). The Extracellular portion of the chain corresponds to 25–678 (VFNLKYTVEE…QEQIGPVNLS (654 aa)). 6 Cadherin domains span residues 31 to 130 (TVEE…APRF), 131 to 239 (PTNH…NPVF), 240 to 347 (DEPV…APEI), 351 to 454 (SENS…PPYF), 455 to 563 (TKPH…TPVM), and 569 to 676 (VNGT…GPVN). Positions 34 and 35 each coordinate Ca(2+). N44 carries an N-linked (GlcNAc...) asparagine glycan. D89 and D91 together coordinate Ca(2+). C94 and C100 are disulfide-bonded. Ca(2+) contacts are provided by D122, V123, N124, D125, N126, E141, D156, D158, N162, E200, D213, D231, S232, N233, D234, N235, and E250. N-linked (GlcNAc...) asparagine glycosylation occurs at N262. Ca(2+) contacts are provided by D265, D267, and N271. N284 carries an N-linked (GlcNAc...) asparagine glycan. Residues D306, E308, D339, I340, N341, D342, N343, E361, and D376 each coordinate Ca(2+). An N-linked (GlcNAc...) asparagine glycan is attached at N377. D378, N382, D413, and E415 together coordinate Ca(2+). A glycan (N-linked (GlcNAc...) asparagine) is linked at N421. Ca(2+) is bound by residues D428, D446, E447, N448, D449, N450, E465, D480, D482, N486, N522, E524, and D537. N486 carries N-linked (GlcNAc...) asparagine glycosylation. Residue N546 is glycosylated (N-linked (GlcNAc...) asparagine). Ca(2+) is bound by residues D555, V556, N557, D558, and N559. N-linked (GlcNAc...) asparagine glycosylation is present at N570. Residues D594, D596, N600, and D646 each contribute to the Ca(2+) site. The N-linked (GlcNAc...) asparagine glycan is linked to N676. The helical transmembrane segment at 679–699 (LIFIIALGSIAVILFVTMIFV) threads the bilayer. Topologically, residues 700 to 1088 (AVKCKRDNKE…GSKRLKDIVL (389 aa)) are cytoplasmic. Disordered stretches follow at residues 792–813 (NSRNAAPNHGYHHTFTGQGPQQ), 851–875 (DMEGNSLKDSGHEESDQTDSEHDVQ), 970–1032 (TFGK…ASST), and 1067–1088 (TLLQDGRDKESPGSKRLKDIVL). Positions 859-875 (DSGHEESDQTDSEHDVQ) are enriched in basic and acidic residues. Positions 1071–1088 (DGRDKESPGSKRLKDIVL) are enriched in basic and acidic residues.

Homodimer; antiparallel. Interacts with cadherin cdh2; the interaction confers robust cell adhesion activity on pcdh19. In the embryo, strongly expressed in the developing nervous system. At 12 hours post fertilization (hpf), shows a segmental expression pattern in the anterior third of the neural keel with strong expression in the presumptive forebrain, cerebellum/rhombomere 1 and rhombomere 4. By 24 hpf, expressed widely in the brain and spinal cord with higher expression levels in the ventral telencephalon, dorsal and central thalamus, optic tectum, central tegmentum, cerebellum and dorsolateral regions of the hindbrain. As development proceeds, expression becomes restricted to the dorsal and/or lateral regions of the central nervous system. Not detected in the spinal cord of two- and three-day old embryos. Expressed in the eye primordium, developing retina, lens and otic vesicle. Expressed in the larval optic tectum at 4 days post-fertilization where it localizes in discrete columns of neurons. Expressed throughout the adult brain with strong expression in the ventromedial telencephalon, periventricular regions of the thalamus and anterior hypothalamus, stratum periventriculare of the optic tectum, dorsal tegmental nucleus, granular regions of the cerebellar body and valvula, and superficial layers of the facial and vagal lobes.

It localises to the cell membrane. In terms of biological role, calcium-dependent cell-adhesion protein. Essential for the early stages of neurulation in the anterior neural plate. Shows little cell adhesion activity on its own but exhibits robust homophilic cell adhesion when in a complex with cadherin cdh2 and appears to mediate the adhesion while cdh2 acts as a cell adhesion cofactor in the complex. Functions with cdh2 to coordinate cell adhesion and cell movements during neurulation. Contributes to neural progenitor cell patterning with cdh2 by promoting homophilic cell interactions. Regulates the columnar organization of neurons in the optic tectum. This Danio rerio (Zebrafish) protein is Protocadherin-19.